A 119-amino-acid chain; its full sequence is Acidic phospholipase A2 E (119 aa).

7 disulfide bridges follow: Cys11-Cys71, Cys26-Cys118, Cys28-Cys44, Cys43-Cys99, Cys50-Cys92, Cys60-Cys85, and Cys78-Cys90. Ca(2+) contacts are provided by Tyr27, Gly29, and Gly31. Residue His47 is part of the active site. A Ca(2+)-binding site is contributed by Asp48. Asp93 is a catalytic residue.

It belongs to the phospholipase A2 family. Group I subfamily. D49 sub-subfamily. The cofactor is Ca(2+). As to expression, expressed by the venom gland.

It is found in the secreted. The enzyme catalyses a 1,2-diacyl-sn-glycero-3-phosphocholine + H2O = a 1-acyl-sn-glycero-3-phosphocholine + a fatty acid + H(+). PLA2 catalyzes the calcium-dependent hydrolysis of the 2-acyl groups in 3-sn-phosphoglycerides. The chain is Acidic phospholipase A2 E from Naja oxiana (Central Asian cobra).